Here is a 208-residue protein sequence, read N- to C-terminus: Small ribosomal subunit protein uS4 (208 aa).

An S4 RNA-binding domain is found at 98 to 161 (QRLDNLVYRM…KNNPQILRAV (64 aa)).

Belongs to the universal ribosomal protein uS4 family. In terms of assembly, part of the 30S ribosomal subunit. Contacts protein S5. The interaction surface between S4 and S5 is involved in control of translational fidelity.

One of the primary rRNA binding proteins, it binds directly to 16S rRNA where it nucleates assembly of the body of the 30S subunit. Its function is as follows. With S5 and S12 plays an important role in translational accuracy. This Campylobacter hominis (strain ATCC BAA-381 / DSM 21671 / CCUG 45161 / LMG 19568 / NCTC 13146 / CH001A) protein is Small ribosomal subunit protein uS4.